The chain runs to 401 residues: Exodeoxyribonuclease 7 large subunit (401 aa).

The protein belongs to the XseA family. As to quaternary structure, heterooligomer composed of large and small subunits.

The protein resides in the cytoplasm. It catalyses the reaction Exonucleolytic cleavage in either 5'- to 3'- or 3'- to 5'-direction to yield nucleoside 5'-phosphates.. Functionally, bidirectionally degrades single-stranded DNA into large acid-insoluble oligonucleotides, which are then degraded further into small acid-soluble oligonucleotides. The polypeptide is Exodeoxyribonuclease 7 large subunit (Lachnoclostridium phytofermentans (strain ATCC 700394 / DSM 18823 / ISDg) (Clostridium phytofermentans)).